Here is a 353-residue protein sequence, read N- to C-terminus: DNA polymerase IV (353 aa).

The region spanning 6 to 187 (IIHIDCDCFY…LPVTKLHGVG (182 aa)) is the UmuC domain. 2 residues coordinate Mg(2+): aspartate 10 and aspartate 105. Glutamate 106 is an active-site residue.

Belongs to the DNA polymerase type-Y family. Monomer. Mg(2+) is required as a cofactor.

It is found in the cytoplasm. It carries out the reaction DNA(n) + a 2'-deoxyribonucleoside 5'-triphosphate = DNA(n+1) + diphosphate. Poorly processive, error-prone DNA polymerase involved in untargeted mutagenesis. Copies undamaged DNA at stalled replication forks, which arise in vivo from mismatched or misaligned primer ends. These misaligned primers can be extended by PolIV. Exhibits no 3'-5' exonuclease (proofreading) activity. May be involved in translesional synthesis, in conjunction with the beta clamp from PolIII. This Pseudomonas savastanoi pv. phaseolicola (strain 1448A / Race 6) (Pseudomonas syringae pv. phaseolicola (strain 1448A / Race 6)) protein is DNA polymerase IV.